The primary structure comprises 390 residues: Nicotinate phosphoribosyltransferase (390 aa).

A Phosphohistidine; by autocatalysis modification is found at His211.

It belongs to the NAPRTase family. Post-translationally, transiently phosphorylated on a His residue during the reaction cycle. Phosphorylation strongly increases the affinity for substrates and increases the rate of nicotinate D-ribonucleotide production. Dephosphorylation regenerates the low-affinity form of the enzyme, leading to product release.

It catalyses the reaction nicotinate + 5-phospho-alpha-D-ribose 1-diphosphate + ATP + H2O = nicotinate beta-D-ribonucleotide + ADP + phosphate + diphosphate. It participates in cofactor biosynthesis; NAD(+) biosynthesis; nicotinate D-ribonucleotide from nicotinate: step 1/1. In terms of biological role, catalyzes the synthesis of beta-nicotinate D-ribonucleotide from nicotinate and 5-phospho-D-ribose 1-phosphate at the expense of ATP. In Chromohalobacter salexigens (strain ATCC BAA-138 / DSM 3043 / CIP 106854 / NCIMB 13768 / 1H11), this protein is Nicotinate phosphoribosyltransferase.